Reading from the N-terminus, the 329-residue chain is G-protein coupled receptor 3 (329 aa).

Over 1–43 (MMWGAGRSMAWFSAGSGSVNVSIDPAEEPTGPATLLPSPRAWD) the chain is Extracellular. Asparagine 20 is a glycosylation site (N-linked (GlcNAc...) asparagine). Residues 44–64 (VVLCISGTLVSCENALVVAII) traverse the membrane as a helical segment. Over 65-73 (VGTPAFRAP) the chain is Cytoplasmic. Residues 74-94 (MFLLVGSLAVADLLAGLGLVL) traverse the membrane as a helical segment. The Extracellular segment spans residues 95 to 108 (HFAADFCIGSPEMS). A helical membrane pass occupies residues 109–129 (LVLVGVLATAFTASIGSLLAI). The Cytoplasmic portion of the chain corresponds to 130 to 153 (TVDRYLSLYNALTYYSETTVTRTY). Residues 154-174 (VMLALVWVGALGLGLVPVLAW) traverse the membrane as a helical segment. The Extracellular portion of the chain corresponds to 175–192 (NCRDGLTTCGVVYPLSKN). The helical transmembrane segment at 193–213 (HLVVLAIVFFMVFGIMLQLYA) threads the bilayer. Residues 214-247 (QICRIVCRHAQQIALQRHLLPASHYVATRKGIAT) are Cytoplasmic-facing. Residues 248 to 268 (LAVVLGAFAACWLPFTVYCLL) traverse the membrane as a helical segment. Topologically, residues 269-277 (GDANSPPLY) are extracellular. Residues 278 to 298 (TYLTLLPATYNSMINPVIYAF) form a helical membrane-spanning segment. Topologically, residues 299–329 (RNQDVQKVLWAICCCCSTSKIPFRSRSPSDV) are cytoplasmic. Cysteine 312 carries the S-palmitoyl cysteine lipid modification. Phosphoserine occurs at positions 323, 325, and 327.

Belongs to the G-protein coupled receptor 1 family. In terms of tissue distribution, abundantly expressed in granule neurons at all development stages. Enriched in the longest tips of neurites during differentiation of hippocampal neurons.

The protein resides in the cell membrane. Functionally, constitutively active G-protein coupled receptor that maintains high 3'-5'-cyclic adenosine monophosphate (cAMP) levels that a plays a role in serveral processes including meiotic arrest in oocytes or neuronal development via activation of numerous intracellular signaling pathways. Acts as an essential activator of thermogenic adipocytes and drives thermogenesis via its intrinsic G(s)-coupling activity without the requirement of a ligand. Has a potential role in modulating a number of brain functions, including behavioral responses to stress, amyloid-beta peptide generation in neurons. Stimulates neurite outgrowth in cerebellar granular neurons modulated via PKA, ERK, and most strongly PI3K-mediated signaling pathways. The sequence is that of G-protein coupled receptor 3 (Gpr3) from Rattus norvegicus (Rat).